Consider the following 513-residue polypeptide: Putative thymidine phosphorylase 2 (513 aa).

It belongs to the thymidine/pyrimidine-nucleoside phosphorylase family. Type 2 subfamily.

It catalyses the reaction thymidine + phosphate = 2-deoxy-alpha-D-ribose 1-phosphate + thymine. The polypeptide is Putative thymidine phosphorylase 2 (Acidovorax sp. (strain JS42)).